The following is a 1528-amino-acid chain: Mitogen-activated protein kinase kinae kinase MCK1 (1528 aa).

The span at 1-11 (MYPGSSQSRPY) shows a compositional bias: low complexity. Disordered stretches follow at residues 1–84 (MYPG…PAPR), 109–208 (ATAP…VPGI), 303–418 (VHAR…NNVR), 449–481 (INGR…KLPF), 607–652 (VKPP…EARL), 695–731 (GKPV…APSA), 746–786 (VQGS…SQPM), 811–929 (SANN…SDDG), 943–1012 (KKAK…EDGK), and 1086–1191 (ATPL…ALLR). Residues 12-21 (QVPPPPPMSP) show a composition bias toward pro residues. The span at 22 to 31 (PLSQMHQQMS) shows a compositional bias: low complexity. The span at 53-64 (APPPPPPGPPPA) shows a compositional bias: pro residues. Residues 157–173 (SSQTWQTTSSSSTNTAS) show a composition bias toward low complexity. Polar residues-rich tracts occupy residues 174–183 (VNDNVQSNAP), 191–205 (NNSA…SSNV), and 318–327 (HGRQGSINSR). Over residues 328–337 (GNDKGTHDGS) the composition is skewed to basic and acidic residues. Over residues 338 to 363 (DSPNTPSSQSRSTTIPTFPDGSSFSN) the composition is skewed to polar residues. Residues 396-408 (SSTPKSSTLSVSP) are compositionally biased toward low complexity. Over residues 409–418 (HSSRFGNNVR) the composition is skewed to polar residues. Composition is skewed to polar residues over residues 613 to 622 (SQQSTWSAGD) and 630 to 641 (GTSSSMSRQQNT). Basic and acidic residues-rich tracts occupy residues 642-652 (LKDDQSEEARL) and 698-714 (VDFD…KNTD). The span at 846-860 (RSQTAGDLSPISQMP) shows a compositional bias: polar residues. The segment covering 917–928 (QSDDDSGDDSDD) has biased composition (acidic residues). Residues 977–986 (VSFNSPQSAR) show a composition bias toward polar residues. The span at 1001-1012 (PKSDMWDSEDGK) shows a compositional bias: basic and acidic residues. A compositionally biased stretch (polar residues) spans 1086–1111 (ATPLNSLPPSRVQSMYNESDTLGSDE). The span at 1142–1152 (SIREKARGAHE) shows a compositional bias: basic and acidic residues. The segment covering 1158–1188 (TQTSMAAPQGLSRSGGTPATETQPTQNNSSA) has biased composition (polar residues). The Protein kinase domain occupies 1238 to 1507 (WFKGQLIGKG…NKLLSQHPFC (270 aa)). Residues 1244–1252 (IGKGTYGRV) and Lys-1267 each bind ATP.

This sequence belongs to the protein kinase superfamily. STE Ser/Thr protein kinase family. MAP kinase kinase kinase subfamily. As to quaternary structure, interacts with the adapter protein MST50 and MIP11.

The catalysed reaction is L-seryl-[protein] + ATP = O-phospho-L-seryl-[protein] + ADP + H(+). It carries out the reaction L-threonyl-[protein] + ATP = O-phospho-L-threonyl-[protein] + ADP + H(+). In terms of biological role, mitogen-activated protein kinase kinase kinase; part of the MCK1-MKK2-MPS1 MAP kinase (MAPK) signal transduction cascade that is essential for appressorium formation, penetration and invasive growth. Beside its role in pathogenesis, the MPS1 cascade is active in conidiation and cellular stress responses. Targets downstream of the the MPS1-MAPK pathway include transcription factors MIG1 and SWI6, as well as GSK1 and MPG1. This chain is Mitogen-activated protein kinase kinae kinase MCK1, found in Pyricularia oryzae (strain 70-15 / ATCC MYA-4617 / FGSC 8958) (Rice blast fungus).